The sequence spans 382 residues: Homeobox protein SHOOT MERISTEMLESS (382 aa).

The segment at 26 to 59 is disordered; the sequence is MMMMMPPIMTSHQHHGHDHQHQQQEHDGYAYQSH. Over residues 44-53 the composition is skewed to basic and acidic residues; it reads HQHQQQEHDG. Residues 262 to 282 enclose the ELK domain; the sequence is ELKGQLLRKYSGYLGSLKQEF. Positions 283–346 form a DNA-binding region, homeobox; TALE-type; the sequence is MKKRKKGKLP…NQRKRHWKPS (64 aa).

This sequence belongs to the TALE/KNOX homeobox family. Forms homodimers. May form heterodimeric complexes with TALE/BELL proteins BEL1, BLH2, BLH3, BLH8/PNF, BLH9/PNY and ATH1. Interacts with CCT8. Binds to MBP2C; this interaction reduces RNA binding capacity. Interacts with FTIP3 and FTIP4. As to expression, expressed in all four types of shoot apical meristems (SAM) i.e. in vegetative, axillary, inflorescence and floral.

It is found in the nucleus. Its subcellular location is the cell junction. The protein localises to the plasmodesma. It localises to the cytoplasm. The protein resides in the endosome. It is found in the cell membrane. Required for shoot apical meristem (SAM) formation during embryogenesis. Negatively regulates ASYMMETRIC LEAVES1 (AS1) and ASYMMETRIC LEAVES2 (AS2 or LBD6). Probably binds to the DNA sequence 5'-TGAC-3'. Binds to RNA. The protein is Homeobox protein SHOOT MERISTEMLESS of Arabidopsis thaliana (Mouse-ear cress).